Here is a 236-residue protein sequence, read N- to C-terminus: MSETFIQERLDSLYEIDCKIVSLLDNISTLFQTYSSSDGDVKESFASQTEEIYSILSKVAIDLRKEVKVMDDNIGVYDKNKDGVMILPIGVDQKNTTLGRKKLNEELKELEGLLPPVSKSNEEDISMADAEQSVEIEKNAEEDKTQVKKEAVQESITEPEKSNQSTNEETKETQPDQIESKDDIKQETPFNEINIPKESTSEPELGLGADIDIDMDNNDNNNDDNSNVDDLFEDIL.

Basic and acidic residues-rich tracts occupy residues I136–V152 and E168–Q186. A disordered region spans residues I136–L236. Over residues S226–L236 the composition is skewed to acidic residues.

It belongs to the Mediator complex subunit 11 family. As to quaternary structure, component of the Mediator complex.

The protein localises to the nucleus. Component of the Mediator complex, a coactivator involved in the regulated transcription of nearly all RNA polymerase II-dependent genes. Mediator functions as a bridge to convey information from gene-specific regulatory proteins to the basal RNA polymerase II transcription machinery. Mediator is recruited to promoters by direct interactions with regulatory proteins and serves as a scaffold for the assembly of a functional pre-initiation complex with RNA polymerase II and the general transcription factors. This Scheffersomyces stipitis (strain ATCC 58785 / CBS 6054 / NBRC 10063 / NRRL Y-11545) (Yeast) protein is Mediator of RNA polymerase II transcription subunit 11 (MED11).